Reading from the N-terminus, the 700-residue chain is Polyphosphate kinase (700 aa).

N45 contacts ATP. Mg(2+) contacts are provided by R373 and R403. The PLD phosphodiesterase 1 domain occupies 428–462 (PGMKIHAKLLLITRREEQGFVRYAHIGTGNFHERT). The Phosphohistidine intermediate role is filled by H433. ATP is bound by residues Y466, R562, and H590. Residues 585–615 (DRFLEHPRVLVVHNDGDPQVFISSADWMERN) form the PLD phosphodiesterase 2 domain.

Belongs to the polyphosphate kinase 1 (PPK1) family. The cofactor is Mg(2+). Post-translationally, an intermediate of this reaction is the autophosphorylated ppk in which a phosphate is covalently linked to a histidine residue through a N-P bond.

The enzyme catalyses [phosphate](n) + ATP = [phosphate](n+1) + ADP. Its function is as follows. Catalyzes the reversible transfer of the terminal phosphate of ATP to form a long-chain polyphosphate (polyP). In Vibrio vulnificus (strain CMCP6), this protein is Polyphosphate kinase.